The sequence spans 365 residues: Caffeic acid 3-O-methyltransferase (365 aa).

Met-130 to Leu-136 contributes to the substrate binding site. Residues Ala-162–Met-180 form a substrate binding region. S-adenosyl-L-methionine-binding residues include Gly-208, Asp-231, Asp-251, Met-252, and Lys-265. The active-site Proton acceptor is His-269.

This sequence belongs to the class I-like SAM-binding methyltransferase superfamily. Cation-independent O-methyltransferase family. COMT subfamily. Homodimer.

The catalysed reaction is (E)-caffeate + S-adenosyl-L-methionine = (E)-ferulate + S-adenosyl-L-homocysteine + H(+). It functions in the pathway aromatic compound metabolism; phenylpropanoid biosynthesis. In terms of biological role, catalyzes the conversion of caffeic acid to ferulic acid and of 5-hydroxyferulic acid to sinapic acid. The resulting products may subsequently be converted to the corresponding alcohols that are incorporated into lignins. This chain is Caffeic acid 3-O-methyltransferase (COMT1), found in Prunus dulcis (Almond).